The chain runs to 313 residues: Protein-methionine-sulfoxide reductase catalytic subunit MsrP (313 aa).

A signal peptide (tat-type signal) is located at residues 1 to 45 (MPAYRPPHIASSEITPKSFYLSRRNFLGTAAGLAAIGLAGREAIA). Mo-molybdopterin is bound by residues N71, 74 to 75 (YE), C128, T163, N213, R218, and 229 to 231 (GIK).

It belongs to the MsrP family. As to quaternary structure, heterodimer of a catalytic subunit (MsrP) and a heme-binding subunit (MsrQ). It depends on Mo-molybdopterin as a cofactor. Post-translationally, predicted to be exported by the Tat system. The position of the signal peptide cleavage has not been experimentally proven.

The protein localises to the periplasm. The enzyme catalyses L-methionyl-[protein] + a quinone + H2O = L-methionyl-(S)-S-oxide-[protein] + a quinol. It catalyses the reaction L-methionyl-[protein] + a quinone + H2O = L-methionyl-(R)-S-oxide-[protein] + a quinol. In terms of biological role, part of the MsrPQ system that repairs oxidized periplasmic proteins containing methionine sulfoxide residues (Met-O), using respiratory chain electrons. Thus protects these proteins from oxidative-stress damage caused by reactive species of oxygen and chlorine generated by the host defense mechanisms. MsrPQ is essential for the maintenance of envelope integrity under bleach stress, rescuing a wide series of structurally unrelated periplasmic proteins from methionine oxidation. The catalytic subunit MsrP is non-stereospecific, being able to reduce both (R-) and (S-) diastereoisomers of methionine sulfoxide. The sequence is that of Protein-methionine-sulfoxide reductase catalytic subunit MsrP from Agrobacterium fabrum (strain C58 / ATCC 33970) (Agrobacterium tumefaciens (strain C58)).